We begin with the raw amino-acid sequence, 303 residues long: UDP-3-O-acyl-N-acetylglucosamine deacetylase (303 aa).

H78, H237, and D241 together coordinate Zn(2+). H264 serves as the catalytic Proton donor.

Belongs to the LpxC family. It depends on Zn(2+) as a cofactor.

It carries out the reaction a UDP-3-O-[(3R)-3-hydroxyacyl]-N-acetyl-alpha-D-glucosamine + H2O = a UDP-3-O-[(3R)-3-hydroxyacyl]-alpha-D-glucosamine + acetate. The protein operates within glycolipid biosynthesis; lipid IV(A) biosynthesis; lipid IV(A) from (3R)-3-hydroxytetradecanoyl-[acyl-carrier-protein] and UDP-N-acetyl-alpha-D-glucosamine: step 2/6. In terms of biological role, catalyzes the hydrolysis of UDP-3-O-myristoyl-N-acetylglucosamine to form UDP-3-O-myristoylglucosamine and acetate, the committed step in lipid A biosynthesis. This Coxiella burnetii (strain CbuG_Q212) (Coxiella burnetii (strain Q212)) protein is UDP-3-O-acyl-N-acetylglucosamine deacetylase.